A 78-amino-acid chain; its full sequence is Large ribosomal subunit protein bL31 (78 aa).

It belongs to the bacterial ribosomal protein bL31 family. Type A subfamily. As to quaternary structure, part of the 50S ribosomal subunit.

Its function is as follows. Binds the 23S rRNA. The polypeptide is Large ribosomal subunit protein bL31 (rpmE) (Rickettsia conorii (strain ATCC VR-613 / Malish 7)).